Consider the following 199-residue polypeptide: MVLVTYPAPDFTASAISCNGDIINNFNFKEFTNNQTSILFFWPMDFTFVCPSEIIAFNQELSKFKKRNVKLIGVSIDSVYVHHAWRNTLSHNGQIDKINFTMVSDLKREIQRSYGIEHPQLGVALRATFLIDKNRIIRHQTINDLPFGRNISETLRMIDALHFYEKYGEVCPANWKKGDTGIKTTQEGIHKYLEKISKK.

One can recognise a Thioredoxin domain in the interval 2 to 163 (VLVTYPAPDF…TLRMIDALHF (162 aa)). The Cysteine sulfenic acid (-SOH) intermediate role is filled by Cys50.

It belongs to the peroxiredoxin family. AhpC/Prx1 subfamily. In terms of assembly, homodimer; disulfide-linked, upon oxidation. 5 homodimers assemble to form a ring-like decamer.

It localises to the cytoplasm. It carries out the reaction a hydroperoxide + NADH + H(+) = an alcohol + NAD(+) + H2O. In terms of biological role, thiol-specific peroxidase that catalyzes the reduction of hydrogen peroxide and organic hydroperoxides to water and alcohols, respectively. Plays a role in cell protection against oxidative stress by detoxifying peroxides. The sequence is that of Alkyl hydroperoxide reductase C from Buchnera aphidicola subsp. Baizongia pistaciae (strain Bp).